Consider the following 466-residue polypeptide: Argininosuccinate lyase (466 aa).

Belongs to the lyase 1 family. Argininosuccinate lyase subfamily.

The protein localises to the cytoplasm. The catalysed reaction is 2-(N(omega)-L-arginino)succinate = fumarate + L-arginine. It functions in the pathway amino-acid biosynthesis; L-arginine biosynthesis; L-arginine from L-ornithine and carbamoyl phosphate: step 3/3. The sequence is that of Argininosuccinate lyase from Bartonella tribocorum (strain CIP 105476 / IBS 506).